We begin with the raw amino-acid sequence, 343 residues long: Ubiquitin carboxyl-terminal hydrolase isozyme L5 (343 aa).

One can recognise a UCH catalytic domain in the interval 6–218 (GWCTIESDPG…IRFNLMAVIK (213 aa)). Residue cysteine 83 is the Nucleophile of the active site. Catalysis depends on histidine 157, which acts as the Proton donor. Residues 242–266 (LSELNSGSGGDNKEESGGATPTTKE) form a disordered region. Residues 306 to 334 (NFTPLILNLIKGLAEKDNLQPLIQKAKDQ) enclose the ULD domain.

Belongs to the peptidase C12 family. Component of the 19S (PA700) regulatory complex of the 26S proteasome.

It is found in the cytoplasm. It localises to the nucleus. The enzyme catalyses Thiol-dependent hydrolysis of ester, thioester, amide, peptide and isopeptide bonds formed by the C-terminal Gly of ubiquitin (a 76-residue protein attached to proteins as an intracellular targeting signal).. Its function is as follows. Protease that specifically cleaves 'Lys-48'-linked polyubiquitin chains. Deubiquitinating enzyme associated with the 19S regulatory subunit of the 26S proteasome. The protein is Ubiquitin carboxyl-terminal hydrolase isozyme L5 (uch2) of Dictyostelium discoideum (Social amoeba).